A 193-amino-acid polypeptide reads, in one-letter code: Chlorate reductase assembly chaperone protein (193 aa).

This sequence belongs to the type II DMSO reductase enzyme chaperone family.

The protein resides in the cytoplasm. Functionally, may function as a system-specific chaperone protein essential for the assembly of an active chlorate reductase ClrABC. In Ideonella dechloratans, this protein is Chlorate reductase assembly chaperone protein (clrD).